We begin with the raw amino-acid sequence, 85 residues long: UPF0291 protein SAK_0343 (85 aa).

The interval 58–85 is disordered; the sequence is GNDVTPEKLRQVQREKGLHGRSLDDPNS. Residues 62-85 are compositionally biased toward basic and acidic residues; sequence TPEKLRQVQREKGLHGRSLDDPNS.

Belongs to the UPF0291 family.

The protein localises to the cytoplasm. This is UPF0291 protein SAK_0343 from Streptococcus agalactiae serotype Ia (strain ATCC 27591 / A909 / CDC SS700).